The sequence spans 569 residues: Alpha-amylase (569 aa).

The signal sequence occupies residues 1–28 (MARKTVAAALALVAGAAVAVTGNAPAQA). 3 residues coordinate Ca(2+): Asn120, Gln166, and Asp175. The active-site Nucleophile is Asp205. Residue His209 participates in Ca(2+) binding. The Proton donor role is filled by Glu232. A CBM20 domain is found at 468-569 (TTPPATSGAS…QLVLNDTFRS (102 aa)).

Belongs to the glycosyl hydrolase 13 family. Monomer. Ca(2+) serves as cofactor.

The catalysed reaction is Endohydrolysis of (1-&gt;4)-alpha-D-glucosidic linkages in polysaccharides containing three or more (1-&gt;4)-alpha-linked D-glucose units.. This is Alpha-amylase (aml) from Streptomyces violaceus (Streptomyces venezuelae).